The following is a 118-amino-acid chain: Holo-[acyl-carrier-protein] synthase (118 aa).

Positions 9 and 52 each coordinate Mg(2+).

It belongs to the P-Pant transferase superfamily. AcpS family. Requires Mg(2+) as cofactor.

It localises to the cytoplasm. The catalysed reaction is apo-[ACP] + CoA = holo-[ACP] + adenosine 3',5'-bisphosphate + H(+). Transfers the 4'-phosphopantetheine moiety from coenzyme A to a Ser of acyl-carrier-protein. The chain is Holo-[acyl-carrier-protein] synthase from Frankia casuarinae (strain DSM 45818 / CECT 9043 / HFP020203 / CcI3).